The primary structure comprises 1025 residues: MKFFALFIYRPVATILLSVAITLCGILGFRMLPVAPLPQVDFPVIIVSASLPGASPETMASSVATPLERSLGRIAGVSEMTSSSSLGSTRIILQFDFDRDINGAARDVQAAINAAQSLLPSGMPSRPTYRKANPSDAPIMILTLTSDTYSQGELYDFASTQLAPTISQIDGVGDVDVGGSSLPAVRVGLNPQALFNQGVSLDDVRTAVSNANVRKPQGALEDGTHRWQIQTNDELKTAAEYQPLIIHYNNGGAVRLGDVATVTDSVQDVRNAGMTNAKPAILLMIRKLPEANIIQTVDSIRAKLPELQETIPAAIDLQIAQDRSPTIRASLEEVEQTLIISVALVILVVFLFLRSGRATIIPAVSVPVSLIGTFAAMYLCGFSLNNLSLMALTIATGFVVDDAIVVLENIARHLEAGMKPLQAALQGTREVGFTVLSMSLSLVAVFLPLLLMGGLPGRLLREFAVTLSVAIGISLLVSLTLTPMMCGWMLKASKPREQKRLRGFGRMLVALQQGYGKSLKWVLNHTRLVGVVLLGTIALNIWLYISIPKTFFPEQDTGVLMGGIQADQSISFQAMRGKLQDFMKIIRDDPAVDNVTGFTGGSRVNSGMMFITLKPRDERSETAQQIIDRLRVKLAKEPGANLFLMAVQDIRVGGRQSNASYQYTLLSDDLAALREWEPKIRKKLATLPELADVNSDQQDNGAEMNLVYDRDTMARLGIDVQAANSLLNNAFGQRQISTIYQPMNQYKVVMEVDPRYTQDISALEKMFVINNEGKAIPLSYFAKWQPANAPLSVNHQGLSAASTISFNLPTGKSLSDASAAIDRAMTQLGVPSTVRGSFAGTAQVFQETMNSQVILIIAAIATVYIVLGILYESYVHPLTILSTLPSAGVGALLALELFNAPFSLIALIGIMLLIGIVKKNAIMMVDFALEAQRHGNLTPQEAIFQACLLRFRPIMMTTLAALFGALPLVLSGGDGSELRQPLGITIVGGLVMSQLLTLYTTPVVYLFFDRLRLRFSRKPKQTVTE.

The next 12 helical transmembrane spans lie at 3–23, 333–353, 360–380, 387–407, 431–451, 463–483, 528–548, 853–873, 875–895, 897–917, 953–973, and 984–1004; these read FFAL…AITL, EVEQ…FLFL, IIPA…MYLC, LSLM…IVVL, VGFT…PLLL, FAVT…TLTP, LVGV…ISIP, VILI…LYES, VHPL…LLAL, LFNA…IGIV, PIMM…LSGG, and ITIV…TPVV.

This sequence belongs to the resistance-nodulation-cell division (RND) (TC 2.A.6) family. MdtC subfamily. In terms of assembly, part of a tripartite efflux system composed of MdtA, MdtB and MdtC. MdtC forms a heteromultimer with MdtB.

Its subcellular location is the cell inner membrane. In terms of biological role, the MdtABC tripartite complex confers resistance against novobiocin and deoxycholate. This chain is Multidrug resistance protein MdtC, found in Escherichia coli (strain K12 / MC4100 / BW2952).